The sequence spans 478 residues: tRNA modification GTPase MnmE (478 aa).

3 residues coordinate (6S)-5-formyl-5,6,7,8-tetrahydrofolate: arginine 25, glutamate 82, and lysine 135. The TrmE-type G domain maps to 231–400 (GIKVVIAGQP…LRQRLLQVVG (170 aa)). Asparagine 241 is a K(+) binding site. GTP contacts are provided by residues 241-246 (NAGKSS), 260-266 (TPIAGTT), and 285-288 (DTAG). Serine 245 contacts Mg(2+). K(+)-binding residues include threonine 260, isoleucine 262, and threonine 265. Threonine 266 contacts Mg(2+). A (6S)-5-formyl-5,6,7,8-tetrahydrofolate-binding site is contributed by lysine 478.

Belongs to the TRAFAC class TrmE-Era-EngA-EngB-Septin-like GTPase superfamily. TrmE GTPase family. In terms of assembly, homodimer. Heterotetramer of two MnmE and two MnmG subunits. It depends on K(+) as a cofactor.

The protein localises to the cytoplasm. Its function is as follows. Exhibits a very high intrinsic GTPase hydrolysis rate. Involved in the addition of a carboxymethylaminomethyl (cmnm) group at the wobble position (U34) of certain tRNAs, forming tRNA-cmnm(5)s(2)U34. This chain is tRNA modification GTPase MnmE, found in Polaromonas sp. (strain JS666 / ATCC BAA-500).